Consider the following 350-residue polypeptide: Fe(2+) transport protein 2 (350 aa).

The first 21 residues, 1 to 21 (MATTKLVYILLILFTFTVSPA), serve as a signal peptide directing secretion. Residues 22–47 (ISTAPEHCDSGFDNPCINKAKALPLK) are Extracellular-facing. The chain crosses the membrane as a helical span at residues 48 to 68 (IVAIVAILTTSLIGVTSPLFS). At 69 to 80 (RYISFLRPDGNG) the chain is on the cytoplasmic side. A helical membrane pass occupies residues 81 to 101 (FMIVKCFSSGIILGTGFMHVL). Residues 102–120 (PDSFEMLSSKCLSDNPWHK) are Extracellular-facing. Residues 121–141 (FPFAGFVAMMSGLVTLAIDSI) form a helical membrane-spanning segment. Residues 142-195 (TTSLYTGKNSVGPVPDEEYGIDQEKAIHMVGHNHSHGHGVVLATKDDGQLLRYQ) lie on the Cytoplasmic side of the membrane. Residues 196 to 216 (VIAMVLEVGILFHSVVIGLSL) form a helical membrane-spanning segment. Residues 217-227 (GATNDSCTIKG) lie on the Extracellular side of the membrane. Residues 228-248 (LIIALCFHHLFEGIGLGGCIL) traverse the membrane as a helical segment. The Cytoplasmic segment spans residues 249–257 (QADFTNVKK). A helical transmembrane segment spans residues 258-278 (FLMAFFFTGTTPCGIFLGIAL). Residues 279-289 (SSIYRDNSPTA) are Extracellular-facing. The chain crosses the membrane as a helical span at residues 290–310 (LITIGLLNACSAGMLIYMALV). Over 311–329 (DLLATEFMGSMLQGSIKLQ) the chain is Cytoplasmic. Residues 330–350 (IKCFTAALLGCAVMSVVAVWA) traverse the membrane as a helical segment.

Belongs to the ZIP transporter (TC 2.A.5) family. As to expression, expressed in the external cell layers of the root subapical zone.

It localises to the cell membrane. High-affinity iron transporter that mediates under iron-deficiency the iron uptake from the rhizosphere across the plasma membrane in the root epidermal layer. Could also be capable of transporting zinc ions. This chain is Fe(2+) transport protein 2 (IRT2), found in Arabidopsis thaliana (Mouse-ear cress).